Reading from the N-terminus, the 486-residue chain is Protein nucleotidyltransferase YdiU (486 aa).

Residues glycine 90, glycine 92, arginine 93, lysine 113, aspartate 125, glycine 126, arginine 176, and arginine 183 each coordinate ATP. Aspartate 252 (proton acceptor) is an active-site residue. The Mg(2+) site is built by asparagine 253 and aspartate 262. Aspartate 262 serves as a coordination point for ATP.

Belongs to the SELO family. Requires Mg(2+) as cofactor. The cofactor is Mn(2+).

The enzyme catalyses L-seryl-[protein] + ATP = 3-O-(5'-adenylyl)-L-seryl-[protein] + diphosphate. It carries out the reaction L-threonyl-[protein] + ATP = 3-O-(5'-adenylyl)-L-threonyl-[protein] + diphosphate. It catalyses the reaction L-tyrosyl-[protein] + ATP = O-(5'-adenylyl)-L-tyrosyl-[protein] + diphosphate. The catalysed reaction is L-histidyl-[protein] + UTP = N(tele)-(5'-uridylyl)-L-histidyl-[protein] + diphosphate. The enzyme catalyses L-seryl-[protein] + UTP = O-(5'-uridylyl)-L-seryl-[protein] + diphosphate. It carries out the reaction L-tyrosyl-[protein] + UTP = O-(5'-uridylyl)-L-tyrosyl-[protein] + diphosphate. Its function is as follows. Nucleotidyltransferase involved in the post-translational modification of proteins. It can catalyze the addition of adenosine monophosphate (AMP) or uridine monophosphate (UMP) to a protein, resulting in modifications known as AMPylation and UMPylation. In Pseudomonas putida (strain GB-1), this protein is Protein nucleotidyltransferase YdiU.